A 363-amino-acid polypeptide reads, in one-letter code: Protein RecA (363 aa).

79-86 provides a ligand contact to ATP; sequence GPESSGKT.

Belongs to the RecA family.

It localises to the cytoplasm. In terms of biological role, can catalyze the hydrolysis of ATP in the presence of single-stranded DNA, the ATP-dependent uptake of single-stranded DNA by duplex DNA, and the ATP-dependent hybridization of homologous single-stranded DNAs. It interacts with LexA causing its activation and leading to its autocatalytic cleavage. The sequence is that of Protein RecA from Methylobacterium sp. (strain 4-46).